Consider the following 159-residue polypeptide: U1 small nuclear ribonucleoprotein C (159 aa).

The Matrin-type zinc finger occupies 4 to 36 (FYCDYCDTYLTHDSPSVRKTHCSGRKHKENVKD). 2 disordered regions span residues 63 to 95 (PPTPFAAPPAGSAMIPPPPSLGGPPRPGMMPAP) and 139 to 159 (MRPPTRPMMLQSRPGMARPDR). Over residues 77–95 (IPPPPSLGGPPRPGMMPAP) the composition is skewed to pro residues.

This sequence belongs to the U1 small nuclear ribonucleoprotein C family. As to quaternary structure, component of the U1 snRNP. The U1 snRNP is composed of the U1 snRNA and the 7 core Sm proteins snrpb, snrpd1, snrpd2, snrpd3, snrpe, snrpf and snrpg that assemble in a heptameric protein ring on the Sm site of the small nuclear RNA to form the core snRNP, and at least 3 U1 snRNP-specific proteins snrnp70/U1-70K, snrpa/U1-A and snrpc/U1-C. snrpc/U1-C interacts with U1 snRNA and the 5' splice-site region of the pre-mRNA.

The protein localises to the nucleus. Its function is as follows. Component of the spliceosomal U1 snRNP, which is essential for recognition of the pre-mRNA 5' splice-site and the subsequent assembly of the spliceosome. SNRPC/U1-C is directly involved in initial 5' splice-site recognition for both constitutive and regulated alternative splicing. The interaction with the 5' splice-site seems to precede base-pairing between the pre-mRNA and the U1 snRNA. Stimulates commitment or early (E) complex formation by stabilizing the base pairing of the 5' end of the U1 snRNA and the 5' splice-site region. This Xenopus laevis (African clawed frog) protein is U1 small nuclear ribonucleoprotein C.